A 407-amino-acid chain; its full sequence is Na(+)-translocating NADH-quinone reductase subunit F (407 aa).

The helical transmembrane segment at 3–23 (IILGVVMFTLIVLVLSGLILA) threads the bilayer. Residues 32–126 (GDVVIEINNE…NMKIELPEEI (95 aa)) form the 2Fe-2S ferredoxin-type domain. Positions 69, 75, 78, and 110 each coordinate [2Fe-2S] cluster. Positions 129–269 (VKKWECEVIS…SGPFGEFFAK (141 aa)) constitute an FAD-binding FR-type domain.

This sequence belongs to the NqrF family. Composed of six subunits; NqrA, NqrB, NqrC, NqrD, NqrE and NqrF. [2Fe-2S] cluster is required as a cofactor. The cofactor is FAD.

Its subcellular location is the cell inner membrane. The enzyme catalyses a ubiquinone + n Na(+)(in) + NADH + H(+) = a ubiquinol + n Na(+)(out) + NAD(+). NQR complex catalyzes the reduction of ubiquinone-1 to ubiquinol by two successive reactions, coupled with the transport of Na(+) ions from the cytoplasm to the periplasm. The first step is catalyzed by NqrF, which accepts electrons from NADH and reduces ubiquinone-1 to ubisemiquinone by a one-electron transfer pathway. The sequence is that of Na(+)-translocating NADH-quinone reductase subunit F from Klebsiella pneumoniae subsp. pneumoniae (strain ATCC 700721 / MGH 78578).